A 209-amino-acid chain; its full sequence is High frequency lysogenization protein HflD homolog (209 aa).

It belongs to the HflD family.

It is found in the cytoplasm. The protein localises to the cell inner membrane. The protein is High frequency lysogenization protein HflD homolog of Proteus mirabilis (strain HI4320).